A 1189-amino-acid chain; its full sequence is Origin recognition complex subunit 1 (1189 aa).

The tract at residues 1–53 is required for peripherial nuclear localization; that stretch reads MTPKKKIFQNFQANDNEILSPTKKGIKLNVSKLNILNFENTIITKEKTNYEYK. T2 carries the phosphothreonine modification. A Phosphoserine modification is found at S20. 4 Leucine heptad repeat repeats span residues 137–143, 144–150, 151–157, and 158–164; these read LTNISSS and LSNSLDE. The span at 239-248 shows a compositional bias: basic residues; the sequence is KKNISKKNTH. Disordered stretches follow at residues 239-421 and 679-749; these read KKNI…DHTD and DTQA…QSSL. Over residues 254–279 the composition is skewed to basic and acidic residues; it reads QNDKNKEKNKEKDKNIKKDRDKDIQT. A compositionally biased stretch (low complexity) spans 304–320; it reads NNDNVKNNLKNNINNNN. Over residues 321–339 the composition is skewed to polar residues; sequence TLKRSSQSVRIDSDLSSAH. A compositionally biased stretch (low complexity) spans 353 to 381; that stretch reads HRNNNNNNNNNNKTTSNNHNKNNKINNNN. The span at 385–394 shows a compositional bias: basic and acidic residues; sequence NYKKQTDTKH. A compositionally biased stretch (low complexity) spans 395–411; the sequence is TNNTQNNKYNKTKTTNT. A compositionally biased stretch (polar residues) spans 695 to 709; that stretch reads KAQTTTNVKANTHTK. Composition is skewed to basic and acidic residues over residues 710-724 and 733-742; these read TLND…KNKE and DVKKKSDPHN. ATP-binding positions include V780 and 815–823; that span reads GMPGTGKTA. Positions 903 and 904 each coordinate Mg(2+). E904 is a binding site for ATP. The PIP-box signature appears at 913 to 922; it reads QKVLFTLFDW. Residues N937 and R1003 each coordinate ATP.

Belongs to the ORC1 family. As to quaternary structure, component of the origin recognition complex (ORC). Interacts (via PIP-box) with PCNA1; the interaction occurs during DNA replication in trophozoites. In terms of processing, in schizonts, may be phosphorylated by PK5; phosphorylation leads to ORC1 dissociation from the telomeres and var gene promoters, translocation to the cytoplasm, where it is degraded by the proteasome.

Its subcellular location is the nucleus. It is found in the chromosome. It localises to the telomere. The protein resides in the nucleolus. It catalyses the reaction ATP + H2O = ADP + phosphate + H(+). In terms of biological role, component of the origin recognition complex (ORC) that binds origins of replication and thus may regulate the initiation of DNA replication. DNA-binding may not be ATP-dependent. In a SIR2A/Sir2-dependent manner, binds to and silences telomers and subtelomeric repeat regions (TAREs). In a SIR2A/Sir2-dependent manner, binds to promoters of var genes localized next to TAREs resulting in their silencing. The polypeptide is Origin recognition complex subunit 1 (Plasmodium falciparum (isolate 3D7)).